Consider the following 164-residue polypeptide: MTTAFYPGSFDPMTNGHLDVLVQALNVASKVIVAIGIHPGKTPLFSFDERAGLIRRSLSESLPQRAGDIAVVAFDNLVVDAARQHGASLLVRGLRDGTDLDYEMQMAGMNRQMAPDIQTLFLPAGTASRPITATLVRQIAAMGGNVSAFVPGPVFQALQAKHKA.

Substrate is bound at residue Ser9. Residues 9–10 and His17 contribute to the ATP site; that span reads SF. Substrate is bound by residues Lys41, Val78, and Arg92. Residues 93-95, Glu103, and 128-134 each bind ATP; these read GLR and SRPITAT.

Belongs to the bacterial CoaD family. In terms of assembly, homohexamer. It depends on Mg(2+) as a cofactor.

The protein resides in the cytoplasm. It carries out the reaction (R)-4'-phosphopantetheine + ATP + H(+) = 3'-dephospho-CoA + diphosphate. It participates in cofactor biosynthesis; coenzyme A biosynthesis; CoA from (R)-pantothenate: step 4/5. In terms of biological role, reversibly transfers an adenylyl group from ATP to 4'-phosphopantetheine, yielding dephospho-CoA (dPCoA) and pyrophosphate. The sequence is that of Phosphopantetheine adenylyltransferase from Sinorhizobium fredii (strain NBRC 101917 / NGR234).